Here is a 274-residue protein sequence, read N- to C-terminus: UPF0758 protein RHE_CH01848 (274 aa).

Residues 1–37 (MAKGPVATSSDDELPFETEEPVADERSFFGGRPQKPA) form a disordered region. Residues 10–22 (SDDELPFETEEPV) show a composition bias toward acidic residues. The region spanning 152-274 (VLSSWSSVIQ…HVSLKGLKLI (123 aa)) is the MPN domain. The Zn(2+) site is built by His-223, His-225, and Asp-236. The JAMM motif signature appears at 223–236 (HNHPSGDPTPSRAD).

It belongs to the UPF0758 family.

This chain is UPF0758 protein RHE_CH01848, found in Rhizobium etli (strain ATCC 51251 / DSM 11541 / JCM 21823 / NBRC 15573 / CFN 42).